A 336-amino-acid polypeptide reads, in one-letter code: Porphobilinogen deaminase (336 aa).

Position 251 is an S-(dipyrrolylmethanemethyl)cysteine (Cys251). Ser327 and Ser329 each carry phosphoserine.

This sequence belongs to the HMBS family. Dipyrromethane serves as cofactor.

It carries out the reaction 4 porphobilinogen + H2O = hydroxymethylbilane + 4 NH4(+). It participates in porphyrin-containing compound metabolism; protoporphyrin-IX biosynthesis; coproporphyrinogen-III from 5-aminolevulinate: step 2/4. Its function is as follows. Tetrapolymerization of the monopyrrole PBG into the hydroxymethylbilane pre-uroporphyrinogen in several discrete steps. This Schizosaccharomyces pombe (strain 972 / ATCC 24843) (Fission yeast) protein is Porphobilinogen deaminase (hem3).